Reading from the N-terminus, the 46-residue chain is Protein PsbN (46 aa).

The chain crosses the membrane as a helical span at residues Ala7–Tyr27.

It belongs to the PsbN family.

Its subcellular location is the cellular thylakoid membrane. May play a role in photosystem I and II biogenesis. The polypeptide is Protein PsbN (Synechococcus sp. (strain CC9902)).